A 348-amino-acid polypeptide reads, in one-letter code: Phospho-N-acetylmuramoyl-pentapeptide-transferase (348 aa).

Helical transmembrane passes span 11–31 (SLIL…IFLG), 67–87 (TAGG…LLPL), 92–112 (TWLF…DDIV), 128–148 (FIVQ…IDKE), 163–183 (IFLG…MLAI), 198–218 (GLAT…AIMS), 222–242 (PLAY…LAFL), 251–271 (VFMG…CAVM), 276–296 (LFLI…ILQV), and 326–346 (VVAR…VAAL).

It belongs to the glycosyltransferase 4 family. MraY subfamily. The cofactor is Mg(2+).

The protein resides in the cell inner membrane. It carries out the reaction UDP-N-acetyl-alpha-D-muramoyl-L-alanyl-gamma-D-glutamyl-meso-2,6-diaminopimeloyl-D-alanyl-D-alanine + di-trans,octa-cis-undecaprenyl phosphate = di-trans,octa-cis-undecaprenyl diphospho-N-acetyl-alpha-D-muramoyl-L-alanyl-D-glutamyl-meso-2,6-diaminopimeloyl-D-alanyl-D-alanine + UMP. Its pathway is cell wall biogenesis; peptidoglycan biosynthesis. Its function is as follows. Catalyzes the initial step of the lipid cycle reactions in the biosynthesis of the cell wall peptidoglycan: transfers peptidoglycan precursor phospho-MurNAc-pentapeptide from UDP-MurNAc-pentapeptide onto the lipid carrier undecaprenyl phosphate, yielding undecaprenyl-pyrophosphoryl-MurNAc-pentapeptide, known as lipid I. This chain is Phospho-N-acetylmuramoyl-pentapeptide-transferase, found in Chlamydia felis (strain Fe/C-56) (Chlamydophila felis).